A 274-amino-acid chain; its full sequence is Cytochrome b-c1 complex subunit Rieske, mitochondrial (274 aa).

At 79 to 103 (SHTDVKVPDFSEYRRLEVLDSTKSS) the chain is on the mitochondrial matrix side. Residues 104 to 140 (RESSEARKGFSYLVTGVTTVGVAYAAKNAVTQFVSSM) traverse the membrane as a helical segment. The Mitochondrial intermembrane segment spans residues 141–274 (SASADVLALA…FTSDDMVIVG (134 aa)). The 86-residue stretch at 187–272 (EAAVELSQLR…YEFTSDDMVI (86 aa)) folds into the Rieske domain. [2Fe-2S] cluster-binding residues include Cys217, His219, Cys236, His239, and Ser241. A disulfide bridge links Cys222 with Cys238.

Belongs to the Rieske iron-sulfur protein family. In terms of assembly, component of the ubiquinol-cytochrome c oxidoreductase (cytochrome b-c1 complex, complex III, CIII), a multisubunit enzyme composed of 11 subunits. The complex is composed of 3 respiratory subunits cytochrome b, cytochrome c1 and Rieske protein UQCRFS1, 2 core protein subunits UQCRC1/QCR1 and UQCRC2/QCR2, and 6 low-molecular weight protein subunits UQCRH/QCR6, UQCRB/QCR7, UQCRQ/QCR8, UQCR10/QCR9, UQCR11/QCR10 and subunit 9, the cleavage product of Rieske protein UQCRFS1. The complex exists as an obligatory dimer and forms supercomplexes (SCs) in the inner mitochondrial membrane with NADH-ubiquinone oxidoreductase (complex I, CI) and cytochrome c oxidase (complex IV, CIV), resulting in different assemblies (supercomplex SCI(1)III(2)IV(1) and megacomplex MCI(2)III(2)IV(2)). Incorporation of the Rieske protein UQCRFS1 is the penultimate step in complex III assembly. Interacts with TTC19, which is involved in the clearance of UQCRFS1 fragments. As to quaternary structure, component of the ubiquinol-cytochrome c oxidoreductase (cytochrome b-c1 complex, complex III, CIII). Subunit 9 corresponds to the mitochondrial targeting sequence (MTS) of Rieske protein UQCRFS1. It is retained after processing and incorporated inside complex III, where it remains bound to the complex and localizes between the 2 core subunits UQCRC1/QCR1 and UQCRC2/QCR2. Requires [2Fe-2S] cluster as cofactor. Post-translationally, proteolytic processing is necessary for the correct insertion of UQCRFS1 in the complex III dimer. Several fragments are generated during UQCRFS1 insertion, most probably due to the endogenous matrix-processing peptidase (MPP) activity of the 2 core protein subunits UQCRC1/QCR1 and UQCRC2/QCR2, which are homologous to the 2 mitochondrial-processing peptidase (MPP) subunits beta-MPP and alpha-MPP respectively. The action of the protease is also necessary for the clearance of the UQCRFS1 fragments.

The protein localises to the mitochondrion inner membrane. The enzyme catalyses a quinol + 2 Fe(III)-[cytochrome c](out) = a quinone + 2 Fe(II)-[cytochrome c](out) + 2 H(+)(out). Its function is as follows. Component of the ubiquinol-cytochrome c oxidoreductase, a multisubunit transmembrane complex that is part of the mitochondrial electron transport chain which drives oxidative phosphorylation. The respiratory chain contains 3 multisubunit complexes succinate dehydrogenase (complex II, CII), ubiquinol-cytochrome c oxidoreductase (cytochrome b-c1 complex, complex III, CIII) and cytochrome c oxidase (complex IV, CIV), that cooperate to transfer electrons derived from NADH and succinate to molecular oxygen, creating an electrochemical gradient over the inner membrane that drives transmembrane transport and the ATP synthase. The cytochrome b-c1 complex catalyzes electron transfer from ubiquinol to cytochrome c, linking this redox reaction to translocation of protons across the mitochondrial inner membrane, with protons being carried across the membrane as hydrogens on the quinol. In the process called Q cycle, 2 protons are consumed from the matrix, 4 protons are released into the intermembrane space and 2 electrons are passed to cytochrome c. The Rieske protein is a catalytic core subunit containing a [2Fe-2S] iron-sulfur cluster. It cycles between 2 conformational states during catalysis to transfer electrons from the quinol bound in the Q(0) site in cytochrome b to cytochrome c1. Incorporation of UQCRFS1 is the penultimate step in complex III assembly. Functionally, component of the ubiquinol-cytochrome c oxidoreductase (cytochrome b-c1 complex, complex III, CIII). UQCRFS1 undergoes proteolytic processing once it is incorporated in the complex III dimer. One of the fragments, called subunit 9, corresponds to its mitochondrial targeting sequence (MTS). The proteolytic processing is necessary for the correct insertion of UQCRFS1 in the complex III dimer, but the persistence of UQCRFS1-derived fragments may prevent newly imported UQCRFS1 to be processed and assembled into complex III and is detrimental for the complex III structure and function. This is Cytochrome b-c1 complex subunit Rieske, mitochondrial (UQCRFS1) from Pan paniscus (Pygmy chimpanzee).